Here is a 347-residue protein sequence, read N- to C-terminus: Protein pelota homolog (347 aa).

It belongs to the eukaryotic release factor 1 family. Pelota subfamily. In terms of assembly, monomer. A divalent metal cation serves as cofactor.

Its subcellular location is the cytoplasm. In terms of biological role, may function in recognizing stalled ribosomes, interact with stem-loop structures in stalled mRNA molecules, and effect endonucleolytic cleavage of the mRNA. May play a role in the release non-functional ribosomes and degradation of damaged mRNAs. Has endoribonuclease activity. The sequence is that of Protein pelota homolog from Methanocaldococcus jannaschii (strain ATCC 43067 / DSM 2661 / JAL-1 / JCM 10045 / NBRC 100440) (Methanococcus jannaschii).